The chain runs to 249 residues: Ubiquinone biosynthesis O-methyltransferase (249 aa).

Residues arginine 41, glycine 72, aspartate 93, and methionine 136 each contribute to the S-adenosyl-L-methionine site.

Belongs to the methyltransferase superfamily. UbiG/COQ3 family.

The catalysed reaction is a 3-demethylubiquinol + S-adenosyl-L-methionine = a ubiquinol + S-adenosyl-L-homocysteine + H(+). It catalyses the reaction a 3-(all-trans-polyprenyl)benzene-1,2-diol + S-adenosyl-L-methionine = a 2-methoxy-6-(all-trans-polyprenyl)phenol + S-adenosyl-L-homocysteine + H(+). It participates in cofactor biosynthesis; ubiquinone biosynthesis. Its function is as follows. O-methyltransferase that catalyzes the 2 O-methylation steps in the ubiquinone biosynthetic pathway. The polypeptide is Ubiquinone biosynthesis O-methyltransferase (Methylobacterium nodulans (strain LMG 21967 / CNCM I-2342 / ORS 2060)).